A 166-amino-acid polypeptide reads, in one-letter code: HTH-type transcriptional regulator PecS (166 aa).

Residues 25-160 (PMLVIGTLSR…LRALLGRVEK (136 aa)) enclose the HTH marR-type domain.

It localises to the cytoplasm. The presence of PecM is required to ensure the full regulation of the pecS-pecM intergenic region by PecS. Its function is as follows. Negatively regulates the expression of genes encoding pectinase and cellulase, which play a major role in virulence, and the expression of the blue pigment indigoidine, which is implicated in pathogenicity and protection from oxidative stress. Represses the expression of genes involved in indigoidine biosynthesis by binding to indA and indC promoter regions. Also binds to promoter sites in the pecS-pecM intergenic region and negatively autoregulates its expression as well as that of pecM. The chain is HTH-type transcriptional regulator PecS from Dickeya dadantii (strain 3937) (Erwinia chrysanthemi (strain 3937)).